We begin with the raw amino-acid sequence, 517 residues long: Serine hydroxymethyltransferase 1, mitochondrial (517 aa).

The N-terminal 30 residues, methionine 1–serine 30, are a transit peptide targeting the mitochondrion. Lysine 286 is subject to N6-(pyridoxal phosphate)lysine.

It belongs to the SHMT family. In terms of assembly, homotetramer. Interacts with GLU1. Interacts with UBP16. The cofactor is pyridoxal 5'-phosphate. Ubiquitinated. Ubiquitous. Mostly expressed in leaves, less abundant in stems, flowers and siliques, and barely detectable in roots.

The protein localises to the mitochondrion. It localises to the cytoplasm. The catalysed reaction is (6R)-5,10-methylene-5,6,7,8-tetrahydrofolate + glycine + H2O = (6S)-5,6,7,8-tetrahydrofolate + L-serine. It functions in the pathway one-carbon metabolism; tetrahydrofolate interconversion. Functions in the photorespiratory pathway in catalyzing the interconversion of serine and glycine. Involved in controlling cell damage caused by abiotic stress, such as high light and salt and the hypersensitive defense response of plants. This chain is Serine hydroxymethyltransferase 1, mitochondrial, found in Arabidopsis thaliana (Mouse-ear cress).